Here is a 212-residue protein sequence, read N- to C-terminus: Probable transaldolase (212 aa).

Lys-84 (schiff-base intermediate with substrate) is an active-site residue.

The protein belongs to the transaldolase family. Type 3B subfamily.

The protein resides in the cytoplasm. The enzyme catalyses D-sedoheptulose 7-phosphate + D-glyceraldehyde 3-phosphate = D-erythrose 4-phosphate + beta-D-fructose 6-phosphate. It participates in carbohydrate degradation; pentose phosphate pathway; D-glyceraldehyde 3-phosphate and beta-D-fructose 6-phosphate from D-ribose 5-phosphate and D-xylulose 5-phosphate (non-oxidative stage): step 2/3. Functionally, transaldolase is important for the balance of metabolites in the pentose-phosphate pathway. The polypeptide is Probable transaldolase (Bacillus velezensis (strain DSM 23117 / BGSC 10A6 / LMG 26770 / FZB42) (Bacillus amyloliquefaciens subsp. plantarum)).